We begin with the raw amino-acid sequence, 396 residues long: L-lactate dehydrogenase (396 aa).

Residues Met1–Gly380 enclose the FMN hydroxy acid dehydrogenase domain. Tyr24 serves as a coordination point for substrate. FMN-binding residues include Ser106 and Gln127. Tyr129 contacts substrate. An FMN-binding site is contributed by Thr155. Arg164 contacts substrate. Lys251 lines the FMN pocket. The active-site Proton acceptor is His275. Arg278 contacts substrate. Asp306–Arg330 is a binding site for FMN.

Belongs to the FMN-dependent alpha-hydroxy acid dehydrogenase family. FMN serves as cofactor.

The protein resides in the cell inner membrane. It carries out the reaction (S)-lactate + A = pyruvate + AH2. Functionally, catalyzes the conversion of L-lactate to pyruvate. Is coupled to the respiratory chain. This is L-lactate dehydrogenase from Escherichia coli O7:K1 (strain IAI39 / ExPEC).